The chain runs to 317 residues: Transaldolase (317 aa).

Lys132 functions as the Schiff-base intermediate with substrate in the catalytic mechanism.

Belongs to the transaldolase family. Type 1 subfamily. Homodimer.

It localises to the cytoplasm. The catalysed reaction is D-sedoheptulose 7-phosphate + D-glyceraldehyde 3-phosphate = D-erythrose 4-phosphate + beta-D-fructose 6-phosphate. Its pathway is carbohydrate degradation; pentose phosphate pathway; D-glyceraldehyde 3-phosphate and beta-D-fructose 6-phosphate from D-ribose 5-phosphate and D-xylulose 5-phosphate (non-oxidative stage): step 2/3. Transaldolase is important for the balance of metabolites in the pentose-phosphate pathway. In Shigella dysenteriae serotype 1 (strain Sd197), this protein is Transaldolase.